The primary structure comprises 462 residues: UDP-N-acetylmuramoylalanine--D-glutamate ligase (462 aa).

ATP is bound at residue 109–115 (GTDGKST).

Belongs to the MurCDEF family.

Its subcellular location is the cytoplasm. The catalysed reaction is UDP-N-acetyl-alpha-D-muramoyl-L-alanine + D-glutamate + ATP = UDP-N-acetyl-alpha-D-muramoyl-L-alanyl-D-glutamate + ADP + phosphate + H(+). It participates in cell wall biogenesis; peptidoglycan biosynthesis. In terms of biological role, cell wall formation. Catalyzes the addition of glutamate to the nucleotide precursor UDP-N-acetylmuramoyl-L-alanine (UMA). In Leptospira borgpetersenii serovar Hardjo-bovis (strain JB197), this protein is UDP-N-acetylmuramoylalanine--D-glutamate ligase.